We begin with the raw amino-acid sequence, 219 residues long: Lipid transferase CIDEB (219 aa).

At threonine 18 the chain carries Phosphothreonine. The region spanning 34-110 (PQRPFRVCDH…VLEQGQSWSP (77 aa)) is the CIDE-N domain.

The protein belongs to the CIDE family. In terms of assembly, interacts with DFFA. Interacts with DFFB; inhibited by DFFB. Interacts with APOB. Interacts with PREB/SEC12; facilitating loading of SCAP-SREBP into COPII vesicles. In terms of tissue distribution, highly enriched in the liver.

Its subcellular location is the lipid droplet. It localises to the endoplasmic reticulum membrane. The protein resides in the golgi apparatus. The protein localises to the cytoplasmic vesicle. It is found in the COPI-coated vesicle. In terms of biological role, lipid transferase specifically expressed in hepatocytes, which promotes unilocular lipid droplet formation by mediating lipid droplet fusion. Lipid droplet fusion promotes their enlargement, restricting lipolysis and favoring lipid storage. Localizes on the lipid droplet surface, at focal contact sites between lipid droplets, and mediates atypical lipid droplet fusion by promoting directional net neutral lipid transfer from the smaller to larger lipid droplets. The transfer direction may be driven by the internal pressure difference between the contacting lipid droplet pair. Promotes lipid exchange and lipid droplet fusion in both small and large lipid droplet-containing hepatocytes. In addition to its role in lipid droplet fusion, also involved in cytoplasmic vesicle biogenesis and transport. Required for very-low-density lipoprotein (VLDL) lipidation and maturation. Probably involved in the biogenesis of VLDL transport vesicles by forming a COPII vesicle coat and facilitating the formation of endoplasmic reticulum-derived large vesicles. Also involved in sterol-regulated export of the SCAP-SREBP complex, composed of SCAP, SREBF1/SREBP1 and SREBF2/SREBP2, by promoting loading of SCAP-SREBP into COPII vesicles. May also activate apoptosis. This is Lipid transferase CIDEB from Mus musculus (Mouse).